The primary structure comprises 131 residues: MSDKYQQRRFDIYGYEKIDTEVLEAIPYEYPEKNTVVEYITEEFSSVCPWTGLPDTAKLTIRYIPHQKLVELKSLKYYLTSYRNVGILQEHAVNRILDDLVKLLEPKFMEVIGEFHERGGISTKVVARYEK.

Cys48 functions as the Thioimide intermediate in the catalytic mechanism. The active-site Proton donor is the Asp55. Residues 70-72 and 89-90 each bind substrate; these read VEL and QE.

Belongs to the GTP cyclohydrolase I family. QueF type 1 subfamily.

The protein localises to the cytoplasm. It carries out the reaction 7-aminomethyl-7-carbaguanine + 2 NADP(+) = 7-cyano-7-deazaguanine + 2 NADPH + 3 H(+). The protein operates within tRNA modification; tRNA-queuosine biosynthesis. In terms of biological role, catalyzes the NADPH-dependent reduction of 7-cyano-7-deazaguanine (preQ0) to 7-aminomethyl-7-deazaguanine (preQ1). The chain is NADPH-dependent 7-cyano-7-deazaguanine reductase from Caldicellulosiruptor bescii (strain ATCC BAA-1888 / DSM 6725 / KCTC 15123 / Z-1320) (Anaerocellum thermophilum).